Reading from the N-terminus, the 160-residue chain is Cytochrome b6-f complex subunit 4 (160 aa).

Helical transmembrane passes span 36-56 (LLYI…GLAV), 95-115 (LLGI…PFIE), and 128-148 (IAMA…IGAC).

Belongs to the cytochrome b family. PetD subfamily. In terms of assembly, the 4 large subunits of the cytochrome b6-f complex are cytochrome b6, subunit IV (17 kDa polypeptide, PetD), cytochrome f and the Rieske protein, while the 4 small subunits are PetG, PetL, PetM and PetN. The complex functions as a dimer.

It is found in the cellular thylakoid membrane. Component of the cytochrome b6-f complex, which mediates electron transfer between photosystem II (PSII) and photosystem I (PSI), cyclic electron flow around PSI, and state transitions. This Prochlorococcus marinus (strain MIT 9313) protein is Cytochrome b6-f complex subunit 4.